Reading from the N-terminus, the 366-residue chain is Protein RecA (366 aa).

Residue 77–84 (GPESSGKT) coordinates ATP. Residues 346–366 (IGGPGGEDDDAGGAAGVGDEA) form a disordered region.

Belongs to the RecA family.

The protein localises to the cytoplasm. Can catalyze the hydrolysis of ATP in the presence of single-stranded DNA, the ATP-dependent uptake of single-stranded DNA by duplex DNA, and the ATP-dependent hybridization of homologous single-stranded DNAs. It interacts with LexA causing its activation and leading to its autocatalytic cleavage. This is Protein RecA from Rhodospirillum rubrum (strain ATCC 11170 / ATH 1.1.1 / DSM 467 / LMG 4362 / NCIMB 8255 / S1).